A 498-amino-acid chain; its full sequence is Glycylpeptide N-tetradecanoyltransferase 2 (498 aa).

Residues 1–88 (MAEDSESAAS…QPSKNPSVPM (88 aa)) are disordered. A compositionally biased stretch (acidic residues) spans 15–32 (ELDDQDTCGIDGDNEEET). Position 38 is a phosphoserine (Ser38). The segment covering 45–57 (AKKKKKKQKRKKE) has biased composition (basic residues). Over residues 61–86 (SGGTKSDSASDSQEIKIQQPSKNPSV) the composition is skewed to polar residues. Tetradecanoyl-CoA-binding residues include His117, Trp122, Leu250, Val252, Ser258, Arg260, Val261, and Ala262.

It belongs to the NMT family.

Its subcellular location is the cytoplasm. It localises to the membrane. The enzyme catalyses N-terminal glycyl-[protein] + tetradecanoyl-CoA = N-tetradecanoylglycyl-[protein] + CoA + H(+). It carries out the reaction N-terminal glycyl-L-lysyl-[protein] + tetradecanoyl-CoA = N-terminal glycyl-(N(6)-tetradecanoyl)-L-lysyl-[protein] + CoA + H(+). Functionally, adds a myristoyl group to the N-terminal glycine residue of certain cellular and viral proteins. Also able to mediate N-terminal lysine myristoylation of proteins: catalyzes myristoylation of ARF6 on both 'Gly-2' and 'Lys-3'. Lysine myristoylation is required to maintain ARF6 on membranes during the GTPase cycle. The polypeptide is Glycylpeptide N-tetradecanoyltransferase 2 (Homo sapiens (Human)).